The chain runs to 31 residues: Cytochrome b6-f complex subunit 6 (31 aa).

The helical transmembrane segment at 3 to 23 (ILISYFCFLLIFFLFTLILFF) threads the bilayer.

It belongs to the PetL family. The 4 large subunits of the cytochrome b6-f complex are cytochrome b6, subunit IV (17 kDa polypeptide, PetD), cytochrome f and the Rieske protein, while the 4 small subunits are PetG, PetL, PetM and PetN. The complex functions as a dimer.

The protein localises to the plastid. It localises to the chloroplast thylakoid membrane. Functionally, component of the cytochrome b6-f complex, which mediates electron transfer between photosystem II (PSII) and photosystem I (PSI), cyclic electron flow around PSI, and state transitions. PetL is important for photoautotrophic growth as well as for electron transfer efficiency and stability of the cytochrome b6-f complex. This Gnetum parvifolium (Small-leaved jointfir) protein is Cytochrome b6-f complex subunit 6.